We begin with the raw amino-acid sequence, 611 residues long: U-box domain-containing protein 12 (611 aa).

The 75-residue stretch at 227-301 (IIPDEFRCPI…SQWCEANGIE (75 aa)) folds into the U-box domain. ARM repeat units lie at residues 355-394 (VNNRICIAEAGAIPLLVNLLSSSDPRTQEHAVTALLNLSI), 396-435 (ENNKASIVDSHAIPKIVEVLKTGSMETRENAAATLFSLSV), 437-476 (DENKVTIGAAGAIPPLINLLCDGSPRGKKDAATAIFNLCI), and 478-517 (QGNKVRAVKAGIVIHLMNFLVDPTGGMIDEALSLLSILAG).

The enzyme catalyses S-ubiquitinyl-[E2 ubiquitin-conjugating enzyme]-L-cysteine + [acceptor protein]-L-lysine = [E2 ubiquitin-conjugating enzyme]-L-cysteine + N(6)-ubiquitinyl-[acceptor protein]-L-lysine.. Its pathway is protein modification; protein ubiquitination. Its function is as follows. Possesses E3 ubiquitin-protein ligase in vitro. The polypeptide is U-box domain-containing protein 12 (PUB12) (Oryza sativa subsp. japonica (Rice)).